A 270-amino-acid polypeptide reads, in one-letter code: (+)-cis,cis-nepetalactol synthase NEPS3 (270 aa).

Residues 21–27 (GGASGIG), 46–48 (DIQ), 70–71 (DV), Asn97, 165–169 (YVMSK), and 198–202 (VATPL) contribute to the NAD(+) site.

It belongs to the short-chain dehydrogenases/reductases (SDR) family. As to quaternary structure, forms homotetramers.

The enzyme catalyses (S)-8-oxocitronellyl enol = cis-cis-nepetalactol. In terms of biological role, functions as a non-oxidoreductive cyclase to promote the formation of cis-cis-nepetalactol. Cis-cis-nepetalactol is then oxidized by NEPS1 into cis-cis-nepetalactone, which belongs to a family of metabolites that are both insect-repellent and have euphoric effect in cats. Binds NAD(+) as classical short-chain dehydrogenase/reductase (SDR), but does not utilize it for its redox-neutral cyclase activity. This Nepeta racemosa (Catmint) protein is (+)-cis,cis-nepetalactol synthase NEPS3.